Consider the following 296-residue polypeptide: Ribosomal RNA small subunit methyltransferase A (296 aa).

S-adenosyl-L-methionine-binding residues include Asn32, Leu34, Gly59, Glu80, Asp105, and Asn130.

The protein belongs to the class I-like SAM-binding methyltransferase superfamily. rRNA adenine N(6)-methyltransferase family. RsmA subfamily.

It localises to the cytoplasm. The catalysed reaction is adenosine(1518)/adenosine(1519) in 16S rRNA + 4 S-adenosyl-L-methionine = N(6)-dimethyladenosine(1518)/N(6)-dimethyladenosine(1519) in 16S rRNA + 4 S-adenosyl-L-homocysteine + 4 H(+). Specifically dimethylates two adjacent adenosines (A1518 and A1519) in the loop of a conserved hairpin near the 3'-end of 16S rRNA in the 30S particle. May play a critical role in biogenesis of 30S subunits. The chain is Ribosomal RNA small subunit methyltransferase A from Ligilactobacillus salivarius (strain UCC118) (Lactobacillus salivarius).